The sequence spans 386 residues: Histidinol-phosphate aminotransferase (386 aa).

Polar residues predominate over residues 1–11 (MMVRKSTASNR). The tract at residues 1 to 22 (MMVRKSTASNRRLQDKGDEEPV) is disordered. Residue K248 is modified to N6-(pyridoxal phosphate)lysine.

The protein belongs to the class-II pyridoxal-phosphate-dependent aminotransferase family. Histidinol-phosphate aminotransferase subfamily. As to quaternary structure, homodimer. The cofactor is pyridoxal 5'-phosphate.

The enzyme catalyses L-histidinol phosphate + 2-oxoglutarate = 3-(imidazol-4-yl)-2-oxopropyl phosphate + L-glutamate. The protein operates within amino-acid biosynthesis; L-histidine biosynthesis; L-histidine from 5-phospho-alpha-D-ribose 1-diphosphate: step 7/9. This is Histidinol-phosphate aminotransferase from Moorella thermoacetica (strain ATCC 39073 / JCM 9320).